Consider the following 149-residue polypeptide: Active regulator of SIRT1 (149 aa).

A disordered region spans residues Met-1–Ala-64. Residues Lys-8–Gly-19 are compositionally biased toward basic and acidic residues. Over residues Ser-30–Lys-41 the composition is skewed to low complexity. A compositionally biased stretch (basic residues) spans Gly-43–Lys-52.

Belongs to the AROS family. In terms of assembly, part of the small subunit (SSU) processome, composed of more than 70 proteins and the RNA chaperone small nucleolar RNA (snoRNA) U3.

It localises to the nucleus. The protein localises to the nucleolus. Its function is as follows. Part of the small subunit (SSU) processome, first precursor of the small eukaryotic ribosomal subunit. During the assembly of the SSU processome in the nucleolus, many ribosome biogenesis factors, an RNA chaperone and ribosomal proteins associate with the nascent pre-rRNA and work in concert to generate RNA folding, modifications, rearrangements and cleavage as well as targeted degradation of pre-ribosomal RNA by the RNA exosome. Acts as a chaperone that specifically mediates the integration of RPS19 in state post-A1. Direct regulator of SIRT1. The protein is Active regulator of SIRT1 (rps19bp1) of Xenopus tropicalis (Western clawed frog).